We begin with the raw amino-acid sequence, 510 residues long: Putative glycerol-3-phosphate transporter 3 (510 aa).

12 helical membrane-spanning segments follow: residues 31-51, 91-111, 123-143, 158-178, 185-205, 217-237, 279-299, 331-351, 355-375, 378-398, 436-456, and 459-479; these read LSFK…YIAF, ALLG…MFVA, FLTI…VAFW, LAGW…GNWF, VIMG…TLIA, FVGP…FLPV, VGFL…CLFF, GNLS…AGYF, LDGR…ALFL, IYGH…GLFV, TGSV…AISW, and VFYM…TLII.

Belongs to the major facilitator superfamily. Organophosphate:Pi antiporter (OPA) (TC 2.A.1.4) family.

The protein resides in the membrane. This Arabidopsis thaliana (Mouse-ear cress) protein is Putative glycerol-3-phosphate transporter 3.